Reading from the N-terminus, the 474-residue chain is Shugoshin-1 (474 aa).

4 disordered regions span residues Met1–Ala53, Val189–Ser226, Asn322–Lys356, and Val422–Asn442. Polar residues-rich tracts occupy residues Gly12–Ser22 and Glu190–Cys201. The segment covering Lys211–Ser220 has biased composition (basic residues). Composition is skewed to polar residues over residues Asn322–Asp341 and Val422–Glu431.

This sequence belongs to the shugoshin family. As to expression, highly expressed in tissues containing meiocytes. Expressed at much lower level in leaves and pollen-containing flowers.

Its subcellular location is the nucleus. The protein resides in the chromosome. It localises to the centromere. Plays a central role in chromosome cohesion during meiosis I by preventing premature dissociation of cohesin complex from centromeres after prophase, when most of cohesin complex dissociates from chromosomes arms. Required for maintenance of centromeric cohesion before prophase II and correct segregation of chromatids during meiosis II. Has apparently no function in mitosis. This chain is Shugoshin-1, found in Zea mays (Maize).